We begin with the raw amino-acid sequence, 425 residues long: Interferon regulatory factor 8 (425 aa).

A DNA-binding region (IRF tryptophan pentad repeat) is located at residues 7 to 114 (GRRLRQWLIE…EPYKVYRIVP (108 aa)).

The protein belongs to the IRF family.

It is found in the nucleus. It localises to the cytoplasm. Its function is as follows. Plays a role as a transcriptional activator or repressor. Specifically binds to the upstream regulatory region of type I IFN and IFN-inducible MHC class I genes (the interferon consensus sequence (ICS)). Plays a regulatory role in cells of the immune system. This is Interferon regulatory factor 8 (IRF8) from Gallus gallus (Chicken).